Consider the following 467-residue polypeptide: Chromosomal replication initiator protein DnaA (467 aa).

The interval 1 to 80 (MTSELWHQCL…APRISLKIGS (80 aa)) is domain I, interacts with DnaA modulators. The tract at residues 80-130 (SITGNSKGQQASKDSAVGATRTTAPSRPVIADVAPSGERNVTVEGAIKHES) is domain II. A domain III, AAA+ region region spans residues 131–347 (YLNPTFTFET…GALKLVIANA (217 aa)). G175, G177, K178, and T179 together coordinate ATP. The segment at 348-467 (HFTGQEITPA…YQNFMRMLTS (120 aa)) is domain IV, binds dsDNA.

It belongs to the DnaA family. In terms of assembly, oligomerizes as a right-handed, spiral filament on DNA at oriC.

The protein localises to the cytoplasm. Plays an essential role in the initiation and regulation of chromosomal replication. ATP-DnaA binds to the origin of replication (oriC) to initiate formation of the DNA replication initiation complex once per cell cycle. Binds the DnaA box (a 9 base pair repeat at the origin) and separates the double-stranded (ds)DNA. Forms a right-handed helical filament on oriC DNA; dsDNA binds to the exterior of the filament while single-stranded (ss)DNA is stabiized in the filament's interior. The ATP-DnaA-oriC complex binds and stabilizes one strand of the AT-rich DNA unwinding element (DUE), permitting loading of DNA polymerase. After initiation quickly degrades to an ADP-DnaA complex that is not apt for DNA replication. Binds acidic phospholipids. This chain is Chromosomal replication initiator protein DnaA, found in Hahella chejuensis (strain KCTC 2396).